The primary structure comprises 102 residues: Small ribosomal subunit protein uS10 (102 aa).

Positions 34–61 are disordered; sequence MAGPIPLPTKTLKVTTRKSTDGEGSSSF.

It belongs to the universal ribosomal protein uS10 family. In terms of assembly, part of the 30S ribosomal subunit.

Functionally, involved in the binding of tRNA to the ribosomes. The sequence is that of Small ribosomal subunit protein uS10 from Methanococcus aeolicus (strain ATCC BAA-1280 / DSM 17508 / OCM 812 / Nankai-3).